The sequence spans 381 residues: Cytochrome b (381 aa).

Helical transmembrane passes span 34 to 54 (FGSL…FLAM), 78 to 99 (WLMR…YLHI), 114 to 134 (WNIG…GYVL), and 179 to 199 (FFAF…IHIL). Heme b is bound by residues His-84 and His-98. The heme b site is built by His-183 and His-197. His-202 serves as a coordination point for a ubiquinone. Transmembrane regions (helical) follow at residues 227 to 247 (YKDL…ALFM), 289 to 309 (LGGV…PLLH), 321 to 341 (LTQI…WIGG), and 348 to 368 (FIMV…FVIP).

Belongs to the cytochrome b family. The cytochrome bc1 complex contains 3 respiratory subunits (MT-CYB, CYC1 and UQCRFS1), 2 core proteins (UQCRC1 and UQCRC2) and probably 6 low-molecular weight proteins. Heme b is required as a cofactor.

The protein localises to the mitochondrion inner membrane. In terms of biological role, component of the ubiquinol-cytochrome c reductase complex (complex III or cytochrome b-c1 complex) that is part of the mitochondrial respiratory chain. The b-c1 complex mediates electron transfer from ubiquinol to cytochrome c. Contributes to the generation of a proton gradient across the mitochondrial membrane that is then used for ATP synthesis. The protein is Cytochrome b (mt-cyb) of Scyliorhinus canicula (Small-spotted catshark).